The primary structure comprises 877 residues: Mediator of RNA polymerase II transcription subunit 16 (877 aa).

WD repeat units lie at residues Trp21–Trp71, Asp72–Glu119, Ser120–Ser165, Pro166–Thr203, Glu204–Thr257, Glu258–Pro334, Thr335–Asp415, Glu416–Ser460, and Met461–Val495. Residues Pro848–Pro877 are disordered. The segment covering Arg866–Pro877 has biased composition (basic and acidic residues).

This sequence belongs to the Mediator complex subunit 16 family. As to quaternary structure, component of the Mediator complex, which is composed of MED1, MED4, MED6, MED7, MED8, MED9, MED10, MED11, MED12, MED13, MED13L, MED14, MED15, MED16, MED17, MED18, MED19, MED20, MED21, MED22, MED23, MED24, MED25, MED26, MED27, MED29, MED30, MED31, CCNC, CDK8 and CDC2L6/CDK11. The MED12, MED13, CCNC and CDK8 subunits form a distinct module termed the CDK8 module. Mediator containing the CDK8 module is less active than Mediator lacking this module in supporting transcriptional activation. Individual preparations of the Mediator complex lacking one or more distinct subunits have been variously termed ARC, CRSP, DRIP, PC2, SMCC and TRAP.

It localises to the nucleus. Functionally, component of the Mediator complex, a coactivator involved in the regulated transcription of nearly all RNA polymerase II-dependent genes. Mediator functions as a bridge to convey information from gene-specific regulatory proteins to the basal RNA polymerase II transcription machinery. Mediator is recruited to promoters by direct interactions with regulatory proteins and serves as a scaffold for the assembly of a functional preinitiation complex with RNA polymerase II and the general transcription factors. In Homo sapiens (Human), this protein is Mediator of RNA polymerase II transcription subunit 16 (MED16).